A 168-amino-acid polypeptide reads, in one-letter code: MVYEVLAVVSGGLLGFGVTWAYLNYALKEEKAKEEEVMRAKISNVTSSVEPKLETKMEKPPSDLSEFVDYLCNKYMLSDVTLLTPDGLPIASNSPTPEEDAAIAPELIKVGKGMLNSSRILLSGENTRVLVMQVNPDVLLHARVARDISKREIERIGEEVNMVLEGII.

The N-terminal stretch at 1–21 (MVYEVLAVVSGGLLGFGVTWA) is a signal peptide.

This is an uncharacterized protein from Archaeoglobus fulgidus (strain ATCC 49558 / DSM 4304 / JCM 9628 / NBRC 100126 / VC-16).